A 545-amino-acid chain; its full sequence is CTP synthase (545 aa).

Residues 1 to 266 are amidoligase domain; the sequence is MTTNYIFVTG…DDYICKRFSL (266 aa). Residue S14 participates in CTP binding. A UTP-binding site is contributed by S14. Residues 15–20 and D72 contribute to the ATP site; that span reads SLGKGI. Mg(2+) is bound by residues D72 and E140. CTP is bound by residues 147-149, 187-192, and K223; these read DIE and KTKPTQ. UTP contacts are provided by residues 187–192 and K223; that span reads KTKPTQ. 239–241 contacts ATP; it reads KDV. The 252-residue stretch at 291-542 folds into the Glutamine amidotransferase type-1 domain; sequence TIGMVGKYIE…VKAASEYQKR (252 aa). L-glutamine is bound at residue G352. Catalysis depends on C379, which acts as the Nucleophile; for glutamine hydrolysis. L-glutamine-binding positions include 380–383, E403, and R470; that span reads LGMQ. Catalysis depends on residues H515 and E517.

Belongs to the CTP synthase family. As to quaternary structure, homotetramer.

The catalysed reaction is UTP + L-glutamine + ATP + H2O = CTP + L-glutamate + ADP + phosphate + 2 H(+). It carries out the reaction L-glutamine + H2O = L-glutamate + NH4(+). It catalyses the reaction UTP + NH4(+) + ATP = CTP + ADP + phosphate + 2 H(+). It functions in the pathway pyrimidine metabolism; CTP biosynthesis via de novo pathway; CTP from UDP: step 2/2. Allosterically activated by GTP, when glutamine is the substrate; GTP has no effect on the reaction when ammonia is the substrate. The allosteric effector GTP functions by stabilizing the protein conformation that binds the tetrahedral intermediate(s) formed during glutamine hydrolysis. Inhibited by the product CTP, via allosteric rather than competitive inhibition. Its function is as follows. Catalyzes the ATP-dependent amination of UTP to CTP with either L-glutamine or ammonia as the source of nitrogen. Regulates intracellular CTP levels through interactions with the four ribonucleotide triphosphates. This chain is CTP synthase, found in Citrobacter koseri (strain ATCC BAA-895 / CDC 4225-83 / SGSC4696).